We begin with the raw amino-acid sequence, 461 residues long: Coagulation factor IX (461 aa).

The signal sequence occupies residues methionine 1–cysteine 28. Residues threonine 29–arginine 46 constitute a propeptide that is removed on maturation. The Ca(2+) site is built by tyrosine 47, asparagine 48, glutamate 53, glutamate 54, glutamate 61, glutamate 63, glutamate 66, glutamate 67, glutamate 72, glutamate 73, and glutamate 76. The 46-residue stretch at tyrosine 47–valine 92 folds into the Gla domain. 4-carboxyglutamate is present on residues glutamate 53, glutamate 54, glutamate 61, glutamate 63, glutamate 66, glutamate 67, glutamate 72, glutamate 73, glutamate 76, glutamate 79, and glutamate 82. Glutamate 61 serves as a coordination point for Mg(2+). Cysteine 64 and cysteine 69 are joined by a disulfide. Residue glutamate 66 coordinates Mg(2+). Residue glutamate 72 participates in Mg(2+) binding. Glutamate 76 is a Mg(2+) binding site. Glutamate 82 is a Ca(2+) binding site. Glutamate 82 provides a ligand contact to Mg(2+). O-linked (GalNAc...) threonine glycosylation is present at threonine 85. 4 residues coordinate Ca(2+): glutamate 86, aspartate 93, glycine 94, and glutamine 96. Glutamate 86 bears the 4-carboxyglutamate mark. Glutamate 86 contacts Mg(2+). Positions aspartate 93–glutamate 129 constitute an EGF-like 1; calcium-binding domain. 10 disulfides stabilise this stretch: cysteine 97/cysteine 108, cysteine 102/cysteine 117, cysteine 119/cysteine 128, cysteine 134/cysteine 145, cysteine 141/cysteine 155, cysteine 157/cysteine 170, cysteine 178/cysteine 335, cysteine 252/cysteine 268, cysteine 382/cysteine 396, and cysteine 407/cysteine 435. O-linked (Glc...) serine glycosylation is present at serine 99. O-linked (Fuc...) serine glycosylation is present at serine 107. The Ca(2+) site is built by aspartate 110 and aspartate 111. Aspartate 110 carries the post-translational modification (3R)-3-hydroxyaspartate. Serine 114 is modified (phosphoserine). One can recognise an EGF-like 2 domain in the interval leucine 130–glutamate 171. The propeptide at alanine 192–arginine 226 is activation peptide. Tyrosine 201 carries the sulfotyrosine modification. Serine 204 carries the phosphoserine modification. A Phosphothreonine; alternate modification is found at threonine 205. An O-linked (GalNAc...) threonine; alternate glycan is attached at threonine 205. Asparagine 213 is a glycosylation site (N-linked (GlcNAc...) asparagine). O-linked (GalNAc...) threonine glycans are attached at residues threonine 215 and threonine 225. One can recognise a Peptidase S1 domain in the interval valine 227 to lysine 459. The active-site Charge relay system is the histidine 267. Ca(2+)-binding residues include glutamate 281, asparagine 283, glutamate 286, glutamate 288, and glutamate 291. Residue aspartate 315 is the Charge relay system of the active site. Residue serine 411 is the Charge relay system of the active site.

It belongs to the peptidase S1 family. As to quaternary structure, heterodimer of a light chain and a heavy chain; disulfide-linked. Interacts (inactive and activated) with F11 (activated) in calcium-dependent manner. Interacts with SERPINC1. Activated by factor XIa, which excises the activation peptide. The propeptide can also be removed by snake venom protease. Post-translationally, the iron and 2-oxoglutarate dependent 3-hydroxylation of aspartate and asparagine is (R) stereospecific within EGF domains. Activated by coagulation factor VIIa-tissue factor (F7-F3) complex in calcium-dependent manner. In terms of processing, predominantly O-glucosylated at Ser-99 by POGLUT1 in vitro.

It localises to the secreted. It carries out the reaction Selective cleavage of Arg-|-Ile bond in factor X to form factor Xa.. Functionally, factor IX is a vitamin K-dependent plasma protein that participates in the intrinsic pathway of blood coagulation by converting factor X to its active form in the presence of Ca(2+) ions, phospholipids, and factor VIIIa. The polypeptide is Coagulation factor IX (F9) (Pan troglodytes (Chimpanzee)).